A 636-amino-acid chain; its full sequence is Sodium-dependent nutrient amino acid transporter 1 (636 aa).

A disordered region spans residues 1–40; it reads MELKTMPQNGANNGNPQGNTSNNNNTNDSSNSNSNNNNKT. The Cytoplasmic segment spans residues 1–50; the sequence is MELKTMPQNGANNGNPQGNTSNNNNTNDSSNSNSNNNNKTERTNWSNGLE. The segment covering 7-40 has biased composition (low complexity); that stretch reads PQNGANNGNPQGNTSNNNNTNDSSNSNSNNNNKT. 3 helical membrane passes run 51 to 71, 78 to 98, and 131 to 151; these read FLMSCISVSVGLGNIWRFPFT, GAFLIPYIIVLFMIGKPMYYL, and TICIISYYSSLLALTLYYLAV. N-linked (GlcNAc...) asparagine glycosylation occurs at Asn-184. 9 consecutive transmembrane segments (helical) span residues 225–245, 254–274, 303–323, 337–357, 397–417, 436–456, 469–489, 511–531, and 547–567; these read PDWKLTIALFVSWIVIFLVIM, AAYFLALFPYVVLFTLLGRAV, AVVQCFFSLAVGSGPIIMFSS, IVTTLDTLTSLLGGITIFAIL, LFSALFFFMLFVLGIGSIVAL, VALVTSICGFLMGLVYVTPGG, TYVVFILAIFELVGIAWIYGV, CWLIFTPIMMIVIFIYSMVTI, and VAGWLLFAIGASQFPLWGWWY.

This sequence belongs to the sodium:neurotransmitter symporter (SNF) (TC 2.A.22) family.

The protein localises to the membrane. Functionally, unusual broad substrate spectrum amino acid:sodium cotransporter that promotes absorption of the D isomers of essential amino acids. Neutral amino acids are the preferred substrates, especially methionine and phenylalanine. This is Sodium-dependent nutrient amino acid transporter 1 from Drosophila grimshawi (Hawaiian fruit fly).